The chain runs to 314 residues: Ribose-phosphate pyrophosphokinase (314 aa).

ATP contacts are provided by residues 37–39 (DGE) and 96–97 (RQ). Positions 131 and 170 each coordinate Mg(2+). Lys194 is an active-site residue. Residues Arg196, Asp220, and 224–228 (DTGGT) each bind D-ribose 5-phosphate.

Belongs to the ribose-phosphate pyrophosphokinase family. Class I subfamily. As to quaternary structure, homohexamer. It depends on Mg(2+) as a cofactor.

It localises to the cytoplasm. It carries out the reaction D-ribose 5-phosphate + ATP = 5-phospho-alpha-D-ribose 1-diphosphate + AMP + H(+). It participates in metabolic intermediate biosynthesis; 5-phospho-alpha-D-ribose 1-diphosphate biosynthesis; 5-phospho-alpha-D-ribose 1-diphosphate from D-ribose 5-phosphate (route I): step 1/1. Its function is as follows. Involved in the biosynthesis of the central metabolite phospho-alpha-D-ribosyl-1-pyrophosphate (PRPP) via the transfer of pyrophosphoryl group from ATP to 1-hydroxyl of ribose-5-phosphate (Rib-5-P). The sequence is that of Ribose-phosphate pyrophosphokinase from Vibrio cholerae serotype O1 (strain ATCC 39315 / El Tor Inaba N16961).